Consider the following 424-residue polypeptide: Enolase (424 aa).

Glutamine 162 serves as a coordination point for (2R)-2-phosphoglycerate. The Proton donor role is filled by glutamate 204. The Mg(2+) site is built by aspartate 241, glutamate 284, and aspartate 311. 4 residues coordinate (2R)-2-phosphoglycerate: lysine 336, arginine 365, serine 366, and lysine 387. Residue lysine 336 is the Proton acceptor of the active site.

It belongs to the enolase family. Requires Mg(2+) as cofactor.

It is found in the cytoplasm. It localises to the secreted. The protein localises to the cell surface. It carries out the reaction (2R)-2-phosphoglycerate = phosphoenolpyruvate + H2O. Its pathway is carbohydrate degradation; glycolysis; pyruvate from D-glyceraldehyde 3-phosphate: step 4/5. Catalyzes the reversible conversion of 2-phosphoglycerate (2-PG) into phosphoenolpyruvate (PEP). It is essential for the degradation of carbohydrates via glycolysis. The chain is Enolase from Parvibaculum lavamentivorans (strain DS-1 / DSM 13023 / NCIMB 13966).